A 29-amino-acid chain; its full sequence is Cycloviolacin-O16 (29 aa).

A cross-link (cyclopeptide (Gly-Asn)) is located at residues 1–29; sequence GLPCGETCFTGKCYTPGCSCSYPICKKIN. 3 cysteine pairs are disulfide-bonded: Cys4/Cys18, Cys8/Cys20, and Cys13/Cys25.

In terms of processing, this is a cyclic peptide.

Its function is as follows. Probably participates in a plant defense mechanism. This chain is Cycloviolacin-O16, found in Viola odorata (Sweet violet).